The primary structure comprises 518 residues: OTU domain-containing protein 5 (518 aa).

2 disordered regions span residues 1–79 and 105–144; these read MTIL…SGGA and PGHSKRRRQGVSAGPGAPGSSPDREDGAGNNSEDEYETAA. Pro residues predominate over residues 39–53; that stretch reads SSPPPRWAYPGNPAP. A compositionally biased stretch (low complexity) spans 116 to 125; that stretch reads SAGPGAPGSS. The OTU domain maps to 171-294; it reads FIIKQMKEDG…NIHYNSVVNP (124 aa). The segment at 176-182 is cys-loop; that stretch reads MKEDGAC. The active site involves Asp-179. The active-site Nucleophile is Cys-182. Positions 231 to 241 are variable-loop; it reads KRKNNCHGNHI. The his-loop stretch occupies residues 282-287; sequence YHRNIH. Residue His-287 is part of the active site. Residues 371-450 are disordered; that stretch reads ARQPRKASAT…GPSNQTCAGA (80 aa). A compositionally biased stretch (low complexity) spans 377–390; that stretch reads ASATCSSATAAASS.

This sequence belongs to the peptidase C85 family.

It catalyses the reaction Thiol-dependent hydrolysis of ester, thioester, amide, peptide and isopeptide bonds formed by the C-terminal Gly of ubiquitin (a 76-residue protein attached to proteins as an intracellular targeting signal).. Its function is as follows. Deubiquitinating enzyme that may function as negative regulator of the innate immune system. Has peptidase activity towards 'Lys-48'- and 'Lys-63'-linked polyubiquitin chains. Can also cleave 'Lys-11'-linked ubiquitin chains (in vitro). In Xenopus tropicalis (Western clawed frog), this protein is OTU domain-containing protein 5 (otud5).